The following is a 346-amino-acid chain: N-acetyl-gamma-glutamyl-phosphate reductase (346 aa).

Cysteine 151 is a catalytic residue.

It belongs to the NAGSA dehydrogenase family. Type 1 subfamily.

It is found in the cytoplasm. The catalysed reaction is N-acetyl-L-glutamate 5-semialdehyde + phosphate + NADP(+) = N-acetyl-L-glutamyl 5-phosphate + NADPH + H(+). It participates in amino-acid biosynthesis; L-arginine biosynthesis; N(2)-acetyl-L-ornithine from L-glutamate: step 3/4. Its function is as follows. Catalyzes the NADPH-dependent reduction of N-acetyl-5-glutamyl phosphate to yield N-acetyl-L-glutamate 5-semialdehyde. This Ehrlichia canis (strain Jake) protein is N-acetyl-gamma-glutamyl-phosphate reductase.